A 177-amino-acid chain; its full sequence is MSDTEDNRNKQTTRRDFIVLTASSVAAVGAACAFWPIIDSLNPSTDVLALSSIEVDLSSIAIGQTVTVKWQGKPIFITNRTPDGIASARAVKMSELIDPEKDEVRVKAGHDNWLVTIGICTHLGCVPLSNQGEYNGWFCPCHGSQYDSSGRVRKGPASLNLVVPPYIFISDTKIRIG.

The chain crosses the membrane as a helical span at residues 18 to 38; the sequence is IVLTASSVAAVGAACAFWPII. Residues 88–175 form the Rieske domain; the sequence is ARAVKMSELI…YIFISDTKIR (88 aa). [2Fe-2S] cluster-binding residues include C120, H122, C139, and H142. C125 and C141 are joined by a disulfide.

It belongs to the Rieske iron-sulfur protein family. In terms of assembly, the main subunits of complex b-c1 are: cytochrome b, cytochrome c1 and the Rieske protein. [2Fe-2S] cluster is required as a cofactor.

Its subcellular location is the cell membrane. The enzyme catalyses a quinol + 2 Fe(III)-[cytochrome c](out) = a quinone + 2 Fe(II)-[cytochrome c](out) + 2 H(+)(out). Its function is as follows. Component of the ubiquinol-cytochrome c reductase complex (complex III or cytochrome b-c1 complex), which is a respiratory chain that generates an electrochemical potential coupled to ATP synthesis. The sequence is that of Ubiquinol-cytochrome c reductase iron-sulfur subunit (petA) from Rickettsia typhi (strain ATCC VR-144 / Wilmington).